The primary structure comprises 229 residues: Potassium/proton antiporter CemA (229 aa).

3 consecutive transmembrane segments (helical) span residues 6 to 26 (AFIP…ISLC), 107 to 127 (ILHF…SFWG), and 189 to 209 (ILSG…KYWI).

This sequence belongs to the CemA family.

The protein localises to the plastid. Its subcellular location is the chloroplast inner membrane. It carries out the reaction K(+)(in) + H(+)(out) = K(+)(out) + H(+)(in). In terms of biological role, contributes to K(+)/H(+) antiport activity by supporting proton efflux to control proton extrusion and homeostasis in chloroplasts in a light-dependent manner to modulate photosynthesis. Prevents excessive induction of non-photochemical quenching (NPQ) under continuous-light conditions. Indirectly promotes efficient inorganic carbon uptake into chloroplasts. The sequence is that of Potassium/proton antiporter CemA from Arabis hirsuta (Hairy rock-cress).